A 158-amino-acid chain; its full sequence is Ribosome maturation factor RimP (158 aa).

This sequence belongs to the RimP family.

The protein resides in the cytoplasm. Its function is as follows. Required for maturation of 30S ribosomal subunits. This chain is Ribosome maturation factor RimP, found in Streptococcus suis (strain 98HAH33).